The following is a 238-amino-acid chain: MPPHLIDGEPHDHAHDRPKRQRTPGEPLRIGIGGPVGSGKTALVAALCKQLREELSLAVLTNDIYTTEDADFLRRHAVLPDERITAVQTGGCPHTAIRDDITANLDAIDDLIAANPPLDLILVESGGDNLTATFSSGLIDVQIFVIDVAGGDKVPRKGGPGVTYSDLLVVNKTDLAPLVGADLGVMERDAAKVRQGRPTALISLTDDPAATPVLAWVREQLAAIAEADRHGAASGIAH.

Over residues 1-15 (MPPHLIDGEPHDHAH) the composition is skewed to basic and acidic residues. Residues 1-27 (MPPHLIDGEPHDHAHDRPKRQRTPGEP) are disordered. Position 34 to 41 (34 to 41 (GPVGSGKT)) interacts with GTP.

It belongs to the SIMIBI class G3E GTPase family. UreG subfamily. In terms of assembly, homodimer. UreD, UreF and UreG form a complex that acts as a GTP-hydrolysis-dependent molecular chaperone, activating the urease apoprotein by helping to assemble the nickel containing metallocenter of UreC. The UreE protein probably delivers the nickel.

It is found in the cytoplasm. In terms of biological role, facilitates the functional incorporation of the urease nickel metallocenter. This process requires GTP hydrolysis, probably effectuated by UreG. The chain is Urease accessory protein UreG from Nocardia farcinica (strain IFM 10152).